Here is a 570-residue protein sequence, read N- to C-terminus: MEEKDVYTQDGTVDIHKNPANKEKTGNWKACRFILGNECCERLAYYGMGTNLVNYLESRLNQGNATAANNVTNWSGTCYITPLIGAFIADAYLGRYWTIATFVFIYVSGMTLLTLSASVPGLKPGNCNADTCHPNSSQTAVFFVALYMIALGTGGIKPCVSSFGADQFDENDENEKIKKSSFFNWFYFSINVGALIAATVLVWIQMNVGWGWGFGVPTVAMVIAVCFFFFGSRFYRLQRPGGSPLTRIFQVIVAAFRKISVKVPEDKSLLFETADDESNIKGSRKLVHTDNLKFFDKAAVESQSDSIKDGEVNPWRLCSVTQVEELKSIITLLPVWATGIVFATVYSQMSTMFVLQGNTMDQHMGKNFEIPSASLSLFDTVSVLFWTPVYDQFIIPLARKFTRNERGFTQLQRMGIGLVVSIFAMITAGVLEVVRLDYVKTHNAYDQKQIHMSIFWQIPQYLLIGCAEVFTFIGQLEFFYDQAPDAMRSLCSALSLTTVALGNYLSTVLVTVVMKITKKNGKPGWIPDNLNRGHLDYFFYLLATLSFLNFLVYLWISKRYKYKKAVGRAH.

T98 bears the Phosphothreonine mark. The next 10 membrane-spanning stretches (helical) occupy residues 99–119, 140–160, 182–202, 210–230, 329–349, 377–397, 414–434, 454–474, 494–514, and 537–557; these read IATF…SASV, AVFF…KPCV, FFNW…TVLV, WGWG…FFFF, IITL…YSQM, LFDT…IIPL, MGIG…LEVV, IFWQ…TFIG, LSLT…TVVM, and YFFY…LWIS.

This sequence belongs to the major facilitator superfamily. Proton-dependent oligopeptide transporter (POT/PTR) (TC 2.A.17) family. Expressed in cotyledons, hypocotyls, leaves, roots, flowers, pistils and vascular tissue of sepals, anthers, carpels and funiculi. Not detected in seeds.

The protein resides in the cell membrane. Functionally, peptide transporter. Mediates the transport of di- and tripeptides. High affinity transporter with low selectivity. No transport of amino acids. The protein is Protein NRT1/ PTR FAMILY 8.1 (NPF8.1) of Arabidopsis thaliana (Mouse-ear cress).